The sequence spans 298 residues: Protease HtpX homolog (298 aa).

A run of 2 helical transmembrane segments spans residues 14–34 (VVLL…AGYL) and 39–59 (YAMG…SMIF). Histidine 143 lines the Zn(2+) pocket. Glutamate 144 is an active-site residue. Histidine 147 serves as a coordination point for Zn(2+). Transmembrane regions (helical) follow at residues 158–178 (IAVA…RMLW) and 197–217 (IITL…ASLI). Zn(2+) is bound at residue glutamate 226.

This sequence belongs to the peptidase M48B family. It depends on Zn(2+) as a cofactor.

The protein localises to the cell membrane. This is Protease HtpX homolog from Streptococcus pyogenes serotype M3 (strain SSI-1).